We begin with the raw amino-acid sequence, 354 residues long: NADH-quinone oxidoreductase subunit H 2 (354 aa).

The next 8 membrane-spanning stretches (helical) occupy residues 4–24 (IALF…VLLT), 81–101 (ILAP…VPFG), 130–150 (IGLL…ALAG), 170–190 (VSYE…SGSF), 201–221 (GGFW…FIYL), 269–289 (VACI…PGFL), 296–316 (LVPV…YIWV), and 333–353 (WKFL…FVAL).

Belongs to the complex I subunit 1 family. NDH-1 is composed of 14 different subunits. Subunits NuoA, H, J, K, L, M, N constitute the membrane sector of the complex.

It is found in the cell inner membrane. It carries out the reaction a quinone + NADH + 5 H(+)(in) = a quinol + NAD(+) + 4 H(+)(out). NDH-1 shuttles electrons from NADH, via FMN and iron-sulfur (Fe-S) centers, to quinones in the respiratory chain. The immediate electron acceptor for the enzyme in this species is believed to be ubiquinone. Couples the redox reaction to proton translocation (for every two electrons transferred, four hydrogen ions are translocated across the cytoplasmic membrane), and thus conserves the redox energy in a proton gradient. This subunit may bind ubiquinone. The sequence is that of NADH-quinone oxidoreductase subunit H 2 from Koribacter versatilis (strain Ellin345).